The primary structure comprises 224 residues: Precorrin-2 dehydrogenase (224 aa).

NAD(+) contacts are provided by residues 26 to 27 and 47 to 50; these read SV and EFSQ.

This sequence belongs to the precorrin-2 dehydrogenase / sirohydrochlorin ferrochelatase family. In terms of assembly, homodimer.

The catalysed reaction is precorrin-2 + NAD(+) = sirohydrochlorin + NADH + 2 H(+). The protein operates within porphyrin-containing compound metabolism; siroheme biosynthesis; sirohydrochlorin from precorrin-2: step 1/1. Functionally, involved in the archaeal biosynthesis of heme. Catalyzes the oxiation of precorrin-2 into sirohydroclorin. This chain is Precorrin-2 dehydrogenase, found in Methanosarcina barkeri (strain Fusaro / DSM 804).